The chain runs to 843 residues: Potassium transporter 10 (843 aa).

The span at 1-15 (MKSPSPVDPESPSSP) shows a compositional bias: low complexity. A disordered region spans residues 1–25 (MKSPSPVDPESPSSPDCKGGSSSKR). Residues 1-34 (MKSPSPVDPESPSSPDCKGGSSSKRRRLPWRMTM) lie on the Cytoplasmic side of the membrane. A helical transmembrane segment spans residues 35 to 55 (SLAYQSLGVVYGDLSTSPLYV). Over 56–72 (YKAAFAEDIQHSETNEE) the chain is Vacuolar. Residues 73-93 (ILGVLSFVFWTLTLVPLLKYV) form a helical membrane-spanning segment. Topologically, residues 94 to 183 (CVVLRADDNG…LLERHKVLQR (90 aa)) are cytoplasmic. Residues 184-204 (VLLVLALVGTCMVIGDGVLTP) form a helical membrane-spanning segment. Residues 205–225 (AISVFSAVSGLELSMEKHQHK) lie on the Vacuolar side of the membrane. Residues 226-246 (YVEVPIACFVLVCLFCLQHYG) form a helical membrane-spanning segment. Residues 247 to 249 (THR) are Cytoplasmic-facing. A helical membrane pass occupies residues 250 to 270 (VGFLFAPIVITWLLCISMIGV). Over 271-298 (YNIVHWEPNVYRALSPYYMYKFLKKTQR) the chain is Vacuolar. A helical transmembrane segment spans residues 299 to 319 (GGWMSLGGILLCITGSEAMFA). Topologically, residues 320–326 (DLGHFNQ) are cytoplasmic. Residues 327–347 (LSIQIAFTCMVYPSLILAYMG) traverse the membrane as a helical segment. Topologically, residues 348–377 (QAAYLCKHHIIESDYRIGFYVSVPEKIRWP) are vacuolar. Residues 378 to 398 (VLAIAILAAVVGSQAVITGTF) form a helical membrane-spanning segment. Over 399–425 (SMIKQCTALGCFPRVKIVHTSDKVHGQ) the chain is Cytoplasmic. The helical transmembrane segment at 426 to 446 (IYIPEINWILMILCLAITIGF) threads the bilayer. Over 447–451 (RDTKH) the chain is Vacuolar. Residues 452–472 (LGNASGLAVITVMLVTTCLMS) form a helical membrane-spanning segment. The Cytoplasmic portion of the chain corresponds to 473–482 (LVIVLCWHKS). The chain crosses the membrane as a helical span at residues 483 to 505 (IFLAFGFIIFFGTIEALYFSASL). The Vacuolar portion of the chain corresponds to 506–510 (IKFRE). The helical transmembrane segment at 511–531 (GAWVPIVLAFIFMAIMCIWHY) threads the bilayer. At 532–843 (GTIKKYEFDL…TLEVGMIYYV (312 aa)) the chain is on the cytoplasmic side. Positions 667–747 (AASSKPKNVC…IMSPSPSPPP (81 aa)) are disordered. Over residues 718-735 (GGSGSGSGRGSSRGGGGA) the composition is skewed to gly residues.

The protein belongs to the HAK/KUP transporter (TC 2.A.72.3) family. In terms of tissue distribution, expressed in roots, shoots, and panicle at flowering stage.

The protein resides in the vacuole membrane. Functionally, high-affinity potassium transporter. The polypeptide is Potassium transporter 10 (HAK10) (Oryza sativa subsp. japonica (Rice)).